The chain runs to 1707 residues: Kinesin-like protein KIF1A (1707 aa).

One can recognise a Kinesin motor domain in the interval 5–354; that stretch reads SVKVAVRVRP…LRYADRAKQI (350 aa). Residues Gly-102, Lys-103, Ser-104, Tyr-105, and Ser-215 each coordinate ATP. Mg(2+) is bound at residue Ser-104. A coiled-coil region spans residues 439–466; the sequence is SEEAIERLKETEKIIAELNETWEEKLRR. Positions 525 to 581 constitute an FHA domain; that stretch reads TRVGREDAERRQDIVLSGHFIKEEHCIFRSDSRGGGEAVVTLEPCEGADTYVNGKKV. Coiled-coil stretches lie at residues 637-671 and 811-831; these read EKQG…LLEQ and LEKL…AAEV. The tract at residues 657-1105 is required for interaction with CALM1, PPFIA2 and TANC2; the sequence is QYRREREEAT…LCKDVLSPLR (449 aa). Disordered regions lie at residues 1424 to 1462 and 1536 to 1576; these read PVPE…EVPN and TDVR…EKEP. Over residues 1429–1453 the composition is skewed to low complexity; the sequence is LSPASSEDSESRSSSGASSPLSAEG. One can recognise a PH domain in the interval 1592-1690; sequence IVSKKGYLHF…WLYAFNPLLA (99 aa).

This sequence belongs to the TRAFAC class myosin-kinesin ATPase superfamily. Kinesin family. Unc-104 subfamily. In terms of assembly, dimeric motor; dimerization is required for ATP-driven processive motility. Monomer in vitro. Interacts with PPFIA1 and PPFIA4. Interacts with CALM1; the interaction is increased in presence of calcium and increases neuronal dense core vesicles motility. Interacts with PPFIA2 and TANC2; both interactions allow the recruitment of neuronal dense core vesicles to dendritic spines and decrease in presence of calcium. Interacts with SYT4 (unphosphorylated) and SYT11; both interactions increase in presence of calcium. Interacts with MADD.

Its subcellular location is the cytoplasm. It is found in the cytoskeleton. The protein resides in the cell projection. The protein localises to the neuron projection. It localises to the axon. Its subcellular location is the perinuclear region. It is found in the synapse. The protein resides in the cytoplasmic vesicle. The protein localises to the secretory vesicle. It localises to the neuronal dense core vesicle membrane. The catalysed reaction is ATP + H2O + a kinesin associated with a microtubule at position (n) = ADP + phosphate a kinesin associated with a microtubule at position (n+1, toward the plus end).. Functionally, kinesin motor with a plus-end-directed microtubule motor activity, involved in anterograde axonal transport of synaptic vesicle precursors. Also required for neuronal dense core vesicles (DCVs) transport to the dendritic spines and axons. The interaction calcium-dependent with CALM1 increases vesicle motility and interaction with the scaffolding proteins PPFIA2 and TANC2 recruits DCVs to synaptic sites. The protein is Kinesin-like protein KIF1A of Rattus norvegicus (Rat).